A 133-amino-acid chain; its full sequence is Cytidine deaminase (133 aa).

The region spanning 3–131 (VDLDWVHHKL…EILKGGFRSY (129 aa)) is the CMP/dCMP-type deaminase domain. Residue 43 to 45 (NIE) coordinates substrate. Cys-54 provides a ligand contact to Zn(2+). Catalysis depends on Glu-56, which acts as the Proton donor. Zn(2+) is bound by residues Cys-89 and Cys-92.

Belongs to the cytidine and deoxycytidylate deaminase family. In terms of assembly, homodimer. Zn(2+) is required as a cofactor.

It catalyses the reaction cytidine + H2O + H(+) = uridine + NH4(+). The catalysed reaction is 2'-deoxycytidine + H2O + H(+) = 2'-deoxyuridine + NH4(+). Functionally, this enzyme scavenges exogenous and endogenous cytidine and 2'-deoxycytidine for UMP synthesis. The polypeptide is Cytidine deaminase (cdd) (Mycoplasma pneumoniae (strain ATCC 29342 / M129 / Subtype 1) (Mycoplasmoides pneumoniae)).